The following is a 121-amino-acid chain: uncharacterized protein (121 aa).

This sequence to M.jannaschii MJ0017 and MJ1466.

This is an uncharacterized protein from Aquifex aeolicus (strain VF5).